The following is a 236-amino-acid chain: RNA-binding protein 24 (236 aa).

Residues 11–88 form the RRM domain; sequence TKIFVGGLPY…RKANVNLAYL (78 aa). Residues 175 to 199 form a necessary for interaction with EIF4E region; it reads QYPYAASPAAAGYVTTGGYSYAVQQ.

Interacts with EIF4E; this interaction prevents EIF4E from binding to p53/TP53 mRNA and inhibits the assembly of translation initiation complex. In terms of tissue distribution, expressed strongly in heart and skeletal muscles. Weakly expressed in intestine, aorta, liver, lung, kidney, uterus and bladder.

The protein resides in the nucleus. Its subcellular location is the cytoplasm. In terms of biological role, multifunctional RNA-binding protein involved in the regulation of pre-mRNA splicing, mRNA stability and mRNA translation important for cell fate decision and differentiation. Plays a major role in pre-mRNA alternative splicing regulation. Mediates preferentially muscle-specific exon inclusion in numerous mRNAs important for striated cardiac and skeletal muscle cell differentiation. Binds to intronic splicing enhancer (ISE) composed of stretches of GU-rich motifs localized in flanking intron of exon that will be included by alternative splicing. Involved in embryonic stem cell (ESC) transition to cardiac cell differentiation by promoting pre-mRNA alternative splicing events of several pluripotency and/or differentiation genes. Plays a role in the regulation of mRNA stability. Binds to 3'-untranslated region (UTR) AU-rich elements in target transcripts, such as CDKN1A and MYOG, leading to maintain their stabilities. Involved in myogenic differentiation by regulating MYOG levels. Binds to multiple regions in the mRNA 3'-UTR of TP63, hence inducing its destabilization. Also promotes the destabilization of the CHRM2 mRNA via its binding to a region in the coding sequence. Plays a role in the regulation of mRNA translation. Mediates repression of p53/TP53 mRNA translation through its binding to U-rich element in the 3'-UTR, hence preventing EIF4E from binding to p53/TP53 mRNA and translation initiation. Binds to a huge amount of mRNAs. Required for embryonic heart development, sarcomer and M-band formation in striated muscles. Together with RBM20, promotes the expression of short isoforms of PDLIM5/ENH in cardiomyocytes. The protein is RNA-binding protein 24 of Mus musculus (Mouse).